The chain runs to 513 residues: Glutamyl-tRNA(Gln) amidotransferase subunit A (513 aa).

Active-site charge relay system residues include Lys-85 and Ser-160. Catalysis depends on Ser-184, which acts as the Acyl-ester intermediate.

Belongs to the amidase family. GatA subfamily. Heterotrimer of A, B and C subunits.

It catalyses the reaction L-glutamyl-tRNA(Gln) + L-glutamine + ATP + H2O = L-glutaminyl-tRNA(Gln) + L-glutamate + ADP + phosphate + H(+). Its function is as follows. Allows the formation of correctly charged Gln-tRNA(Gln) through the transamidation of misacylated Glu-tRNA(Gln) in organisms which lack glutaminyl-tRNA synthetase. The reaction takes place in the presence of glutamine and ATP through an activated gamma-phospho-Glu-tRNA(Gln). The protein is Glutamyl-tRNA(Gln) amidotransferase subunit A of Bifidobacterium longum subsp. infantis (strain ATCC 15697 / DSM 20088 / JCM 1222 / NCTC 11817 / S12).